Here is an 88-residue protein sequence, read N- to C-terminus: Translation initiation factor IF-1 3 (88 aa).

The S1-like domain occupies 1–72 (MAKEELLELD…TKGCINFRHK (72 aa)).

Belongs to the IF-1 family. In terms of assembly, component of the 30S ribosomal translation pre-initiation complex which assembles on the 30S ribosome in the order IF-2 and IF-3, IF-1 and N-formylmethionyl-tRNA(fMet); mRNA recruitment can occur at any time during PIC assembly.

It localises to the cytoplasm. Its function is as follows. One of the essential components for the initiation of protein synthesis. Stabilizes the binding of IF-2 and IF-3 on the 30S subunit to which N-formylmethionyl-tRNA(fMet) subsequently binds. Helps modulate mRNA selection, yielding the 30S pre-initiation complex (PIC). Upon addition of the 50S ribosomal subunit IF-1, IF-2 and IF-3 are released leaving the mature 70S translation initiation complex. The sequence is that of Translation initiation factor IF-1 3 from Burkholderia orbicola (strain AU 1054).